Here is a 117-residue protein sequence, read N- to C-terminus: Large ribosomal subunit protein bL20 (117 aa).

Belongs to the bacterial ribosomal protein bL20 family.

Its function is as follows. Binds directly to 23S ribosomal RNA and is necessary for the in vitro assembly process of the 50S ribosomal subunit. It is not involved in the protein synthesizing functions of that subunit. The protein is Large ribosomal subunit protein bL20 of Oleidesulfovibrio alaskensis (strain ATCC BAA-1058 / DSM 17464 / G20) (Desulfovibrio alaskensis).